Reading from the N-terminus, the 227-residue chain is NAD(P)H-quinone oxidoreductase subunit K, chloroplastic (227 aa).

[4Fe-4S] cluster is bound by residues Cys43, Cys44, Cys108, and Cys139. Residues 173-192 (RSFTTNHKFQVGRSSHTGNY) show a composition bias toward polar residues. Positions 173–201 (RSFTTNHKFQVGRSSHTGNYDQGFLSKPP) are disordered.

This sequence belongs to the complex I 20 kDa subunit family. NDH is composed of at least 16 different subunits, 5 of which are encoded in the nucleus. It depends on [4Fe-4S] cluster as a cofactor.

It is found in the plastid. Its subcellular location is the chloroplast thylakoid membrane. The catalysed reaction is a plastoquinone + NADH + (n+1) H(+)(in) = a plastoquinol + NAD(+) + n H(+)(out). The enzyme catalyses a plastoquinone + NADPH + (n+1) H(+)(in) = a plastoquinol + NADP(+) + n H(+)(out). Its function is as follows. NDH shuttles electrons from NAD(P)H:plastoquinone, via FMN and iron-sulfur (Fe-S) centers, to quinones in the photosynthetic chain and possibly in a chloroplast respiratory chain. The immediate electron acceptor for the enzyme in this species is believed to be plastoquinone. Couples the redox reaction to proton translocation, and thus conserves the redox energy in a proton gradient. The polypeptide is NAD(P)H-quinone oxidoreductase subunit K, chloroplastic (Trachelium caeruleum (Blue throatwort)).